Consider the following 520-residue polypeptide: Protein RCC2 (520 aa).

Residues 1–78 (MPRKKGAAWE…RPATAGKAAG (78 aa)) form a disordered region. Phosphoserine is present on serine 14. Threonine 18 is modified (phosphothreonine). The span at 22–34 (GPRRRGGPAGRKR) shows a compositional bias: basic residues. Residues serine 41, serine 42, serine 43, serine 44, serine 48, and serine 49 each carry the phosphoserine modification. Residues 69 to 78 (RPATAGKAAG) are compositionally biased toward low complexity. Residues lysine 90 and lysine 122 each carry the N6-acetyllysine modification. 7 RCC1 repeats span residues 101–163 (KGQL…SLLI), 166–217 (EGKL…ALTD), 219–269 (GSVF…LMDC), 271–345 (GNLY…VLDS), 346–399 (QKRV…AVSE), 401–445 (GGLF…VAAD), and 446–499 (ESTI…VIAR). Lysine 291 carries the post-translational modification N6-acetyllysine. Residues 316–323 (KTKDGQIL) are required for interaction with RAC1. Threonine 340 bears the Phosphothreonine mark. Residue lysine 375 is modified to N6-acetyllysine.

Interacts with RAC1. Interacts with nucleotide-free and with GDP and GTP-bound forms of RAC1, with a slight preference for GDP-bound RAC1. Binds preferentially to the nucleotide-free form of RAC1. Interacts with CORO1C. Interacts with microtubules.

The protein localises to the nucleus. It localises to the nucleolus. Its subcellular location is the cytoplasm. The protein resides in the cytoskeleton. It is found in the chromosome. The protein localises to the centromere. It localises to the spindle. Its subcellular location is the midbody. The protein resides in the cell membrane. Functionally, multifunctional protein that may affect its functions by regulating the activity of small GTPases, such as RAC1 and RALA. Required for normal progress through the cell cycle, both during interphase and during mitosis. Required for the presence of normal levels of MAD2L1, AURKB and BIRC5 on inner centromeres during mitosis, and for normal attachment of kinetochores to mitotic spindles. Required for normal organization of the microtubule cytoskeleton in interphase cells. Functions as a guanine nucleotide exchange factor (GEF) for RALA. Interferes with the activation of RAC1 by guanine nucleotide exchange factors. Prevents accumulation of active, GTP-bound RAC1, and suppresses RAC1-mediated reorganization of the actin cytoskeleton and formation of membrane protrusions. Required for normal cellular responses to contacts with the extracellular matrix of adjacent cells, and for directional cell migration in response to a fibronectin gradient (in vitro). This is Protein RCC2 (Rcc2) from Mus musculus (Mouse).